The sequence spans 393 residues: Lysophosphatidic acid receptor 1 (393 aa).

At 1 to 50 the chain is on the extracellular side; that stretch reads MAAASTSSPVVSQPQFTAMNEPQCFYNESIAFFYNRSGKYLATEWNTVSK. Intrachain disulfides connect C24-C190 and C188-C195. N-linked (GlcNAc...) asparagine glycans are attached at residues N27 and N35. K39 provides a ligand contact to a 1-acyl-sn-glycero-3-phosphate. The chain crosses the membrane as a helical span at residues 51–75; it reads LVMGLGITVCIFIMLANLLVMVAIY. Residues 76–83 are Cytoplasmic-facing; the sequence is VNRRFHFP. A helical transmembrane segment spans residues 84–107; sequence IYYLMANLAAADFFAGLAYFYLMF. The Extracellular segment spans residues 108–121; it reads NTGPNTRRLTVSTW. Residues 122 to 144 traverse the membrane as a helical segment; it reads LLRQGLIDTTVTASVANLLAIAI. 124 to 129 lines the a 1-acyl-sn-glycero-3-phosphate pocket; that stretch reads RQGLID. Residues 145-163 lie on the Cytoplasmic side of the membrane; sequence ERHITVFRMQLHTRMSNRR. A helical membrane pass occupies residues 164–184; it reads VVVVIVVIWTMAIVMGAIPSV. Over 185–204 the chain is Extracellular; sequence GWNCICDIENCSNMAPLYSD. Residues 205 to 225 traverse the membrane as a helical segment; that stretch reads SYLVFWAIFNLVTFVVMVVLY. W210 contributes to the a 1-acyl-sn-glycero-3-phosphate binding site. Topologically, residues 226 to 255 are cytoplasmic; that stretch reads AHIFGYVRQRTMRMSRHSSGPRRNRDTMMS. The chain crosses the membrane as a helical span at residues 256 to 280; the sequence is LLKTVVIVLGAFIICWTPGLVLLLL. The Extracellular segment spans residues 281–294; the sequence is DVCCPQCDVLAYEK. Residues C284 and C287 are joined by a disulfide bond. The chain crosses the membrane as a helical span at residues 295-315; that stretch reads FFLLLAEFNSAMNPIIYSYRD. The Cytoplasmic portion of the chain corresponds to 316 to 393; sequence KEMSATFRQI…PPERPGQGRV (78 aa). Residue S341 is modified to Phosphoserine. Phosphothreonine is present on T351. Basic and acidic residues predominate over residues 369-381; sequence KMRGGHHLLRDEQ. The disordered stretch occupies residues 369–393; it reads KMRGGHHLLRDEQPPPPERPGQGRV.

This sequence belongs to the G-protein coupled receptor 1 family. Interacts with RALA and GRK2. Interacts with GNAQ and GNA13. Interacts with CD14; the interaction is enhanced by exposure to bacterial lipopolysaccharide (LPS). Post-translationally, N-glycosylated. Detected in brain cortex and in pituitary pars tuberalis.

It is found in the cell surface. It localises to the cell membrane. The protein localises to the endosome. Receptor for lysophosphatidic acid (LPA). Plays a role in the reorganization of the actin cytoskeleton, cell migration, differentiation and proliferation, and thereby contributes to the responses to tissue damage and infectious agents. Activates downstream signaling cascades via the G(i)/G(o), G(12)/G(13), and G(q) families of heteromeric G proteins. Signaling inhibits adenylyl cyclase activity and decreases cellular cAMP levels. Signaling triggers an increase of cytoplasmic Ca(2+) levels. Activates RALA; this leads to the activation of phospholipase C (PLC) and the formation of inositol 1,4,5-trisphosphate. Signaling mediates activation of down-stream MAP kinases. Contributes to the regulation of cell shape. Promotes Rho-dependent reorganization of the actin cytoskeleton in neuronal cells and neurite retraction. Promotes the activation of Rho and the formation of actin stress fibers. Promotes formation of lamellipodia at the leading edge of migrating cells via activation of RAC1. Through its function as LPA receptor, plays a role in chemotaxis and cell migration, including responses to injury and wounding. Plays a role in triggering inflammation in response to bacterial lipopolysaccharide (LPS) via its interaction with CD14. Promotes cell proliferation in response to LPA. Inhibits the intracellular ciliogenesis pathway in response to LPA and through AKT1 activation. Required for normal skeleton development. May play a role in osteoblast differentiation. Required for normal brain development. Required for normal proliferation, survival and maturation of newly formed neurons in the adult dentate gyrus. Plays a role in pain perception and in the initiation of neuropathic pain. The protein is Lysophosphatidic acid receptor 1 (LPAR1) of Ovis aries (Sheep).